We begin with the raw amino-acid sequence, 326 residues long: ATP synthase gamma chain (326 aa).

It belongs to the ATPase gamma chain family. F-type ATPases have 2 components, CF(1) - the catalytic core - and CF(0) - the membrane proton channel. CF(1) has five subunits: alpha(3), beta(3), gamma(1), delta(1), epsilon(1). CF(0) has three main subunits: a, b and c.

It localises to the cell membrane. Functionally, produces ATP from ADP in the presence of a proton gradient across the membrane. The gamma chain is believed to be important in regulating ATPase activity and the flow of protons through the CF(0) complex. The polypeptide is ATP synthase gamma chain (Rhodococcus jostii (strain RHA1)).